The following is a 389-amino-acid chain: Phospho-N-acetylmuramoyl-pentapeptide-transferase (389 aa).

10 helical membrane-spanning segments follow: residues R25–I45, T73–L93, F97–Y117, F135–A155, I190–A210, G222–M242, A259–F279, F287–V307, I311–V331, and Q366–L386.

It belongs to the glycosyltransferase 4 family. MraY subfamily. Mg(2+) is required as a cofactor.

It is found in the cell inner membrane. The catalysed reaction is UDP-N-acetyl-alpha-D-muramoyl-L-alanyl-gamma-D-glutamyl-meso-2,6-diaminopimeloyl-D-alanyl-D-alanine + di-trans,octa-cis-undecaprenyl phosphate = di-trans,octa-cis-undecaprenyl diphospho-N-acetyl-alpha-D-muramoyl-L-alanyl-D-glutamyl-meso-2,6-diaminopimeloyl-D-alanyl-D-alanine + UMP. It functions in the pathway cell wall biogenesis; peptidoglycan biosynthesis. In terms of biological role, catalyzes the initial step of the lipid cycle reactions in the biosynthesis of the cell wall peptidoglycan: transfers peptidoglycan precursor phospho-MurNAc-pentapeptide from UDP-MurNAc-pentapeptide onto the lipid carrier undecaprenyl phosphate, yielding undecaprenyl-pyrophosphoryl-MurNAc-pentapeptide, known as lipid I. In Paraburkholderia phytofirmans (strain DSM 17436 / LMG 22146 / PsJN) (Burkholderia phytofirmans), this protein is Phospho-N-acetylmuramoyl-pentapeptide-transferase.